The sequence spans 126 residues: MAITKEDILNAVAEMSVMDVCDLVKMMEDKFGVSAAAATVAVAAGPVAGPAEAAEEKTEFDVVLVDAGSNKIAAIKAVRGATGLGLKEAKDAVEGTPFTVKEAASKEEAEALKKQLEEAGAKVELK.

This sequence belongs to the bacterial ribosomal protein bL12 family. In terms of assembly, homodimer. Part of the ribosomal stalk of the 50S ribosomal subunit. Forms a multimeric L10(L12)X complex, where L10 forms an elongated spine to which 2 to 4 L12 dimers bind in a sequential fashion. Binds GTP-bound translation factors.

Its function is as follows. Forms part of the ribosomal stalk which helps the ribosome interact with GTP-bound translation factors. Is thus essential for accurate translation. This Francisella tularensis subsp. mediasiatica (strain FSC147) protein is Large ribosomal subunit protein bL12.